Consider the following 75-residue polypeptide: CDC42 small effector protein 2-C (75 aa).

2 S-palmitoyl cysteine lipidation sites follow: cysteine 10 and cysteine 11. Positions 29-42 (IGEPMNFVHTAHVG) constitute a CRIB domain.

Belongs to the CDC42SE/SPEC family.

It is found in the cytoplasm. Its subcellular location is the cytoskeleton. The protein resides in the cell membrane. Functionally, probably involved in the organization of the actin cytoskeleton by acting downstream of CDC42, inducing actin filament assembly. The sequence is that of CDC42 small effector protein 2-C (cdc42se2-c) from Xenopus laevis (African clawed frog).